Here is a 468-residue protein sequence, read N- to C-terminus: MPISDINAGSHILVFPYPAQGHMLTLLDLTHQLAIRNLTITILVTPKNLPTISPLLAAHPTTVSALLLPLPPHPAIPSGIENVKDLPNDAFKAMMVALGDLYNPLRDWFRNQPNPPVAIISDFFLGWTHHLAVELGIRRYTFSPSGALALSVIFSLWRYQPKRIDVENEKEAIKFPKIPNSPEYPWWQLSPIYRSYVEGDPDSEFIKDGFLADIASWGIVINSFTELEQVYVDHLKHELGHDQVFAVGPLLPPGDKTSGRGGSSSNDVLSWLDTCADRTVVYVCFGSQMVLTNGQMEVVALGLEKSRVKFVWSVKEPTVGHEAANYGRVPPGFEDRVSGRGLVIRGWVPQVAILSHDSVGVFLTHCGWNSVMEAVAAEVLMLTWPMSADQFSNATLLHELKVGIKVCEGSNIVPNSDELAELFSKSLSDETRLERKRVKEFAKSAKEAVGPKGSSVGELERLVDNLSL.

UDP-alpha-D-glucose is bound by residues serine 287, 347–348 (WV), 365–373 (HCGWNSVME), and 387–390 (SADQ).

Belongs to the UDP-glycosyltransferase family.

In terms of biological role, may glycosylate diterpenes or flavonols in leaves. The chain is UDP-glycosyltransferase 89B2 from Stevia rebaudiana (Stevia).